A 358-amino-acid chain; its full sequence is Biotin synthase (358 aa).

The Radical SAM core domain maps to 47–306; it reads KNNSKIKLCA…ALYKIIMPYA (260 aa). Positions 65, 69, and 72 each coordinate [4Fe-4S] cluster. Residues Ser-142, Cys-174, Cys-233, and Arg-309 each coordinate [2Fe-2S] cluster.

The protein belongs to the radical SAM superfamily. Biotin synthase family. Homodimer. [4Fe-4S] cluster is required as a cofactor. [2Fe-2S] cluster serves as cofactor.

The enzyme catalyses (4R,5S)-dethiobiotin + (sulfur carrier)-SH + 2 reduced [2Fe-2S]-[ferredoxin] + 2 S-adenosyl-L-methionine = (sulfur carrier)-H + biotin + 2 5'-deoxyadenosine + 2 L-methionine + 2 oxidized [2Fe-2S]-[ferredoxin]. It participates in cofactor biosynthesis; biotin biosynthesis; biotin from 7,8-diaminononanoate: step 2/2. Catalyzes the conversion of dethiobiotin (DTB) to biotin by the insertion of a sulfur atom into dethiobiotin via a radical-based mechanism. In Methanocaldococcus jannaschii (strain ATCC 43067 / DSM 2661 / JAL-1 / JCM 10045 / NBRC 100440) (Methanococcus jannaschii), this protein is Biotin synthase.